The sequence spans 256 residues: Imidazole glycerol phosphate synthase subunit HisF (256 aa).

Residues Asp11 and Asp130 contribute to the active site.

This sequence belongs to the HisA/HisF family. In terms of assembly, heterodimer of HisH and HisF.

The protein localises to the cytoplasm. It carries out the reaction 5-[(5-phospho-1-deoxy-D-ribulos-1-ylimino)methylamino]-1-(5-phospho-beta-D-ribosyl)imidazole-4-carboxamide + L-glutamine = D-erythro-1-(imidazol-4-yl)glycerol 3-phosphate + 5-amino-1-(5-phospho-beta-D-ribosyl)imidazole-4-carboxamide + L-glutamate + H(+). It participates in amino-acid biosynthesis; L-histidine biosynthesis; L-histidine from 5-phospho-alpha-D-ribose 1-diphosphate: step 5/9. In terms of biological role, IGPS catalyzes the conversion of PRFAR and glutamine to IGP, AICAR and glutamate. The HisF subunit catalyzes the cyclization activity that produces IGP and AICAR from PRFAR using the ammonia provided by the HisH subunit. The sequence is that of Imidazole glycerol phosphate synthase subunit HisF from Prochlorococcus marinus (strain MIT 9301).